Consider the following 351-residue polypeptide: Phosphoribosylformylglycinamidine cyclo-ligase (351 aa).

It belongs to the AIR synthase family.

It localises to the cytoplasm. It catalyses the reaction 2-formamido-N(1)-(5-O-phospho-beta-D-ribosyl)acetamidine + ATP = 5-amino-1-(5-phospho-beta-D-ribosyl)imidazole + ADP + phosphate + H(+). It participates in purine metabolism; IMP biosynthesis via de novo pathway; 5-amino-1-(5-phospho-D-ribosyl)imidazole from N(2)-formyl-N(1)-(5-phospho-D-ribosyl)glycinamide: step 2/2. This Burkholderia ambifaria (strain MC40-6) protein is Phosphoribosylformylglycinamidine cyclo-ligase.